Consider the following 325-residue polypeptide: Lipid droplet-associated hydrolase (325 aa).

S139 (nucleophile) is an active-site residue. Catalysis depends on charge relay system residues D271 and H300.

This sequence belongs to the AB hydrolase superfamily. LDAH family.

Its subcellular location is the lipid droplet. It localises to the endoplasmic reticulum. The catalysed reaction is a cholesterol ester + H2O = cholesterol + a fatty acid + H(+). Probable serine lipid hydrolase associated with lipid droplets. Has low cholesterol esterase activity. Appears to lack triglyceride lipase activity. Involved in cholesterol and triglyceride homeostasis; stimulates cellular triglyceride accumulation and cellular cholesterol release. Acts antagonistically with PNPLA2/ATGL in regulation of cellular lipid stores. May regulate triglyceride accumulation indirectly through stimulation of PNPLA2/ATGL ubiquitination and proteasomal degradation. Promotes microtubule-dependent lipid droplet fusion. Highly expressed in macrophage-rich areas in atherosclerotic lesions, suggesting that it could promote cholesterol ester turnover in macrophages. The sequence is that of Lipid droplet-associated hydrolase from Rattus norvegicus (Rat).